The chain runs to 177 residues: 18.9 kDa heat shock protein (177 aa).

Positions 1–35 (MSMITSMLGRKQNAQQKGGGGGGRTGGGGGGEIEP) are disordered. Over residues 17–32 (KGGGGGGRTGGGGGGE) the composition is skewed to gly residues. The region spanning 63–177 (AAGVPSTASM…PHARIIPITN (115 aa)) is the sHSP domain.

It belongs to the small heat shock protein (HSP20) family. In terms of assembly, may form oligomeric structures.

It localises to the cytoplasm. In Oryza sativa subsp. japonica (Rice), this protein is 18.9 kDa heat shock protein (HSP18.9).